The sequence spans 32 residues: Secreted proteinase (32 aa).

A disordered region spans residues 1–32 (DTANDPKYGSQYAPQKVNADVDQGVXXXHPEL). Asp-22 functions as the Charge relay system in the catalytic mechanism.

Belongs to the peptidase S8 family.

The protein localises to the secreted. The sequence is that of Secreted proteinase from Haloferax mediterranei (Halobacterium mediterranei).